Here is a 285-residue protein sequence, read N- to C-terminus: 1,4-dihydroxy-2-naphthoyl-CoA synthase (285 aa).

Substrate-binding positions include Arg-45, 84 to 89 (SGGDQK), Tyr-97, 129 to 133 (YSIGG), Thr-155, Ser-161, Tyr-258, and Lys-273. 154 to 156 (QTG) serves as a coordination point for hydrogencarbonate.

It belongs to the enoyl-CoA hydratase/isomerase family. MenB subfamily. As to quaternary structure, homohexamer. Dimer of a homotrimer. It depends on hydrogencarbonate as a cofactor.

The enzyme catalyses 2-succinylbenzoyl-CoA + H(+) = 1,4-dihydroxy-2-naphthoyl-CoA + H2O. It participates in quinol/quinone metabolism; 1,4-dihydroxy-2-naphthoate biosynthesis; 1,4-dihydroxy-2-naphthoate from chorismate: step 6/7. The protein operates within quinol/quinone metabolism; menaquinone biosynthesis. With respect to regulation, inhibited by sulfite and nitrate. Converts o-succinylbenzoyl-CoA (OSB-CoA) to 1,4-dihydroxy-2-naphthoyl-CoA (DHNA-CoA). The protein is 1,4-dihydroxy-2-naphthoyl-CoA synthase of Escherichia coli (strain K12).